Consider the following 508-residue polypeptide: UDP-N-acetylmuramoyl-L-alanyl-D-glutamate--2,6-diaminopimelate ligase (508 aa).

S33 lines the UDP-N-acetyl-alpha-D-muramoyl-L-alanyl-D-glutamate pocket. G121–T127 lines the ATP pocket. UDP-N-acetyl-alpha-D-muramoyl-L-alanyl-D-glutamate-binding positions include N162, T163 to T164, S190, Q196, and R198. K230 carries the N6-carboxylysine modification. Meso-2,6-diaminopimelate contacts are provided by residues R399, D423 to R426, G474, and E478. The short motif at D423–R426 is the Meso-diaminopimelate recognition motif element.

Belongs to the MurCDEF family. MurE subfamily. The cofactor is Mg(2+). Post-translationally, carboxylation is probably crucial for Mg(2+) binding and, consequently, for the gamma-phosphate positioning of ATP.

It is found in the cytoplasm. It carries out the reaction UDP-N-acetyl-alpha-D-muramoyl-L-alanyl-D-glutamate + meso-2,6-diaminopimelate + ATP = UDP-N-acetyl-alpha-D-muramoyl-L-alanyl-gamma-D-glutamyl-meso-2,6-diaminopimelate + ADP + phosphate + H(+). Its pathway is cell wall biogenesis; peptidoglycan biosynthesis. In terms of biological role, catalyzes the addition of meso-diaminopimelic acid to the nucleotide precursor UDP-N-acetylmuramoyl-L-alanyl-D-glutamate (UMAG) in the biosynthesis of bacterial cell-wall peptidoglycan. This is UDP-N-acetylmuramoyl-L-alanyl-D-glutamate--2,6-diaminopimelate ligase from Buchnera aphidicola subsp. Baizongia pistaciae (strain Bp).